Reading from the N-terminus, the 130-residue chain is uncharacterized protein (130 aa).

The HTH cro/C1-type domain occupies 19-73 (IYSLRLAKGLSRQQLAEVIDVTHQQLQKYEKAINRISVGRLVLIAEALDRNIDYF). A DNA-binding region (H-T-H motif) is located at residues 30 to 49 (RQQLAEVIDVTHQQLQKYEK).

This is an uncharacterized protein from Rickettsia prowazekii (strain Madrid E).